Consider the following 434-residue polypeptide: Lecithin-cholesterol acyltransferase-like 1 (434 aa).

Residue Ser191 is the Acyl-ester intermediate of the active site. Active-site charge relay system residues include Asp354 and His386.

The protein belongs to the AB hydrolase superfamily. Lipase family.

This Oryza sativa subsp. japonica (Rice) protein is Lecithin-cholesterol acyltransferase-like 1.